The primary structure comprises 77 residues: MKFYLLLTAALLLTAVIIEAAPTDHQDEARDLMREERDDKSNCPISHPNYCSFTPVCCKHECLSNNKCSSSEFIPGQ.

Positions 1–20 (MKFYLLLTAALLLTAVIIEA) are cleaved as a signal peptide. Residues 21–36 (APTDHQDEARDLMREE) constitute a propeptide that is removed on maturation. Intrachain disulfides connect Cys-43/Cys-58, Cys-51/Cys-62, and Cys-57/Cys-68.

In terms of tissue distribution, expressed by the venom duct.

The protein localises to the secreted. The sequence is that of Conotoxin Cl6.12 from Californiconus californicus (California cone).